A 589-amino-acid polypeptide reads, in one-letter code: Protein drl-1 (589 aa).

The tract at residues 1–51 (MHSEEKYLHIPNNTKYPEIIVEEEEEDPSEEERSELSETDDVATPLRPSDT) is disordered. Residues 20–41 (IVEEEEEDPSEEERSELSETDD) show a composition bias toward acidic residues. The 277-residue stretch at 97 to 373 (WRINEDVMKD…QNLLESHGSK (277 aa)) folds into the Protein kinase domain. The next 3 membrane-spanning stretches (helical) occupy residues 429-449 (GFIP…VLLV), 456-476 (LCAA…IFLI), and 491-511 (GFVV…TTLC).

This sequence belongs to the protein kinase superfamily. STE Ser/Thr protein kinase family. In terms of tissue distribution, expressed in vulval and body wall muscles, hypodermis, seam cells and tissues next to pharynx and anus.

It localises to the membrane. In terms of biological role, negatively regulates lifespan and health span probably by participating in nutrient sensing. This is Protein drl-1 from Caenorhabditis elegans.